Reading from the N-terminus, the 92-residue chain is Putative pterin-4-alpha-carbinolamine dehydratase (92 aa).

This sequence belongs to the pterin-4-alpha-carbinolamine dehydratase family.

It carries out the reaction (4aS,6R)-4a-hydroxy-L-erythro-5,6,7,8-tetrahydrobiopterin = (6R)-L-erythro-6,7-dihydrobiopterin + H2O. In Natronomonas pharaonis (strain ATCC 35678 / DSM 2160 / CIP 103997 / JCM 8858 / NBRC 14720 / NCIMB 2260 / Gabara) (Halobacterium pharaonis), this protein is Putative pterin-4-alpha-carbinolamine dehydratase.